Here is a 126-residue protein sequence, read N- to C-terminus: Large ribosomal subunit protein eL28 (126 aa).

Residue serine 2 is modified to N-acetylserine.

This sequence belongs to the eukaryotic ribosomal protein eL28 family.

The chain is Large ribosomal subunit protein eL28 (rpl-28) from Caenorhabditis elegans.